Reading from the N-terminus, the 626-residue chain is Putative ankyrin repeat protein R837 (626 aa).

ANK repeat units lie at residues 42–72 (EYFN…GLIR), 80–109 (TLNT…NHRY), 110–139 (SEDK…NIKS), 140–169 (RNNY…DITV), 171–199 (DYEV…DIKK), 201–230 (NKKR…DVYR), 242–269 (KNYK…YQLS), 270–298 (DTNN…LHEL), 299–328 (NLNQ…DINT), 330–358 (GNSC…RLTS), 393–416 (TIMS…KSSL), 417–446 (DYES…ITKQ), 452–479 (INNS…GINI), 480–509 (CINY…NINE), 510–539 (FGDL…NIYI), 540–569 (IKDN…DYHK), 570–599 (KNEL…KTKT), and 601–626 (FFDP…NEIK).

In Acanthamoeba polyphaga (Amoeba), this protein is Putative ankyrin repeat protein R837.